The following is a 336-amino-acid chain: Tetraacyldisaccharide 4'-kinase (336 aa).

60 to 67 serves as a coordination point for ATP; that stretch reads TVGGTGKT.

This sequence belongs to the LpxK family.

It carries out the reaction a lipid A disaccharide + ATP = a lipid IVA + ADP + H(+). It participates in glycolipid biosynthesis; lipid IV(A) biosynthesis; lipid IV(A) from (3R)-3-hydroxytetradecanoyl-[acyl-carrier-protein] and UDP-N-acetyl-alpha-D-glucosamine: step 6/6. Its function is as follows. Transfers the gamma-phosphate of ATP to the 4'-position of a tetraacyldisaccharide 1-phosphate intermediate (termed DS-1-P) to form tetraacyldisaccharide 1,4'-bis-phosphate (lipid IVA). In Pseudomonas fluorescens (strain ATCC BAA-477 / NRRL B-23932 / Pf-5), this protein is Tetraacyldisaccharide 4'-kinase.